We begin with the raw amino-acid sequence, 182 residues long: Large ribosomal subunit protein bL17m (182 aa).

It belongs to the bacterial ribosomal protein bL17 family.

The protein resides in the mitochondrion. The polypeptide is Large ribosomal subunit protein bL17m (mrpl17) (Dictyostelium discoideum (Social amoeba)).